The chain runs to 485 residues: UDP-N-acetylmuramate--L-alanine ligase (485 aa).

ATP is bound at residue 127-133; sequence GTHGKTT.

Belongs to the MurCDEF family.

Its subcellular location is the cytoplasm. The catalysed reaction is UDP-N-acetyl-alpha-D-muramate + L-alanine + ATP = UDP-N-acetyl-alpha-D-muramoyl-L-alanine + ADP + phosphate + H(+). It participates in cell wall biogenesis; peptidoglycan biosynthesis. Functionally, cell wall formation. In Shewanella frigidimarina (strain NCIMB 400), this protein is UDP-N-acetylmuramate--L-alanine ligase.